A 123-amino-acid polypeptide reads, in one-letter code: Small ribosomal subunit protein uS12 (123 aa).

Asp89 bears the 3-methylthioaspartic acid mark. Residues 104–123 (TAGVKDRKQARSKYGAKRPK) form a disordered region. Over residues 113–123 (ARSKYGAKRPK) the composition is skewed to basic residues.

Belongs to the universal ribosomal protein uS12 family. In terms of assembly, part of the 30S ribosomal subunit. Contacts proteins S8 and S17. May interact with IF1 in the 30S initiation complex.

Its function is as follows. With S4 and S5 plays an important role in translational accuracy. In terms of biological role, interacts with and stabilizes bases of the 16S rRNA that are involved in tRNA selection in the A site and with the mRNA backbone. Located at the interface of the 30S and 50S subunits, it traverses the body of the 30S subunit contacting proteins on the other side and probably holding the rRNA structure together. The combined cluster of proteins S8, S12 and S17 appears to hold together the shoulder and platform of the 30S subunit. The chain is Small ribosomal subunit protein uS12 from Neisseria gonorrhoeae (strain ATCC 700825 / FA 1090).